A 612-amino-acid polypeptide reads, in one-letter code: MTTAAIPGLQGEAPTNNQELLNWIAEAVELFQPEAVVFADGSQEEWDRMAEELVEAGTLIRLNEEKRPNSFLARSNPSDVARVESRTFICSENQEDAGPTNNWAPPQAMKEEMTEVYRGSMKGRTMYVVPFCMGPITDPEPKLGVQLTDSAYVVMSMRIMTRMGKDALDKIGENGSFVRCLHSVGAPLEEGQEDVAWPCNDTKYITQFPETKEIWSYGSGYGGNAILAKKCYALRIASVMAREEGWMAEHMLILKLTNPEGQAYHIAAAFPSACGKTNLAMITPTIPGWKAEVVGDDIAWLKFREDGHLYAVNPENGFFGVAPGTNYASNPIAMQTMEPGNTLFTNVALTDDGDIWWEGMDGDAPEHLIDWKGNDWTPESNQPAAHPNSRYCVAIEQCPTAAPEFNDWKGVKVDAILFGGRRPDTVPLVTQTHDWEHGTMVGALLASGQTAASAEAKVGTLRHDPMAMLPFMGYNAGEYLQNWIDMGNKGGDKMPSIFLVNWFRRGEDGRFLWPGFGENSRVLKWVIDRIEGRVGAEETVVGYTARAEDLDLEGLDTPIEDIREALTAPAEQWAADLEDNAEYLTFLGPKVPTEVHEQFEALKKRIQAAQAS.

Substrate is bound by residues Arg-82 and 221–223; that span reads YGG. Residues Lys-230 and His-250 each coordinate Mn(2+). Residue Ser-272 coordinates substrate. A GTP-binding site is contributed by 273–278; it reads ACGKTN. The active site involves Cys-274. Position 297 (Asp-297) interacts with Mn(2+). Position 388 to 390 (388 to 390) interacts with substrate; it reads NSR. Residues Arg-390, Arg-421, and 516–519 contribute to the GTP site; that span reads FGEN.

This sequence belongs to the phosphoenolpyruvate carboxykinase [GTP] family. In terms of assembly, monomer. Requires Mn(2+) as cofactor.

It is found in the cytoplasm. It carries out the reaction oxaloacetate + GTP = phosphoenolpyruvate + GDP + CO2. It participates in carbohydrate biosynthesis; gluconeogenesis. In terms of biological role, catalyzes the conversion of oxaloacetate (OAA) to phosphoenolpyruvate (PEP), the rate-limiting step in the metabolic pathway that produces glucose from lactate and other precursors derived from the citric acid cycle. This Corynebacterium efficiens (strain DSM 44549 / YS-314 / AJ 12310 / JCM 11189 / NBRC 100395) protein is Phosphoenolpyruvate carboxykinase [GTP].